The primary structure comprises 250 residues: Cell division protein ZapD (250 aa).

Belongs to the ZapD family. As to quaternary structure, interacts with FtsZ.

The protein localises to the cytoplasm. In terms of biological role, cell division factor that enhances FtsZ-ring assembly. Directly interacts with FtsZ and promotes bundling of FtsZ protofilaments, with a reduction in FtsZ GTPase activity. The chain is Cell division protein ZapD from Yersinia enterocolitica serotype O:8 / biotype 1B (strain NCTC 13174 / 8081).